The sequence spans 417 residues: NADH-quinone oxidoreductase subunit D (417 aa).

This sequence belongs to the complex I 49 kDa subunit family. In terms of assembly, NDH-1 is composed of 14 different subunits. Subunits NuoB, C, D, E, F, and G constitute the peripheral sector of the complex.

It localises to the cell inner membrane. The enzyme catalyses a quinone + NADH + 5 H(+)(in) = a quinol + NAD(+) + 4 H(+)(out). NDH-1 shuttles electrons from NADH, via FMN and iron-sulfur (Fe-S) centers, to quinones in the respiratory chain. The immediate electron acceptor for the enzyme in this species is believed to be ubiquinone. Couples the redox reaction to proton translocation (for every two electrons transferred, four hydrogen ions are translocated across the cytoplasmic membrane), and thus conserves the redox energy in a proton gradient. The protein is NADH-quinone oxidoreductase subunit D of Legionella pneumophila (strain Corby).